The primary structure comprises 557 residues: Alpha-glucosidase (557 aa).

Asp-201 serves as the catalytic Nucleophile. Residue Glu-256 is the Proton donor of the active site.

The protein belongs to the glycosyl hydrolase 13 family.

The enzyme catalyses Hydrolysis of terminal, non-reducing (1-&gt;4)-linked alpha-D-glucose residues with release of alpha-D-glucose.. The chain is Alpha-glucosidase (agl) from Pediococcus pentosaceus.